Here is a 443-residue protein sequence, read N- to C-terminus: 3-phosphoshikimate 1-carboxyvinyltransferase (443 aa).

The interval M1 to V22 is disordered. Residues K28, S29, and R33 each contribute to the 3-phosphoshikimate site. Phosphoenolpyruvate is bound at residue K28. The phosphoenolpyruvate site is built by G101 and R129. Residues S174, Q176, D326, and K353 each contribute to the 3-phosphoshikimate site. A phosphoenolpyruvate-binding site is contributed by Q176. The Proton acceptor role is filled by D326. Phosphoenolpyruvate is bound by residues R357 and R400.

It belongs to the EPSP synthase family. In terms of assembly, monomer.

It localises to the cytoplasm. It catalyses the reaction 3-phosphoshikimate + phosphoenolpyruvate = 5-O-(1-carboxyvinyl)-3-phosphoshikimate + phosphate. It participates in metabolic intermediate biosynthesis; chorismate biosynthesis; chorismate from D-erythrose 4-phosphate and phosphoenolpyruvate: step 6/7. In terms of biological role, catalyzes the transfer of the enolpyruvyl moiety of phosphoenolpyruvate (PEP) to the 5-hydroxyl of shikimate-3-phosphate (S3P) to produce enolpyruvyl shikimate-3-phosphate and inorganic phosphate. The polypeptide is 3-phosphoshikimate 1-carboxyvinyltransferase (Afipia carboxidovorans (strain ATCC 49405 / DSM 1227 / KCTC 32145 / OM5) (Oligotropha carboxidovorans)).